We begin with the raw amino-acid sequence, 354 residues long: Photosystem II protein D1 1 (354 aa).

The next 3 membrane-spanning stretches (helical) occupy residues Tyr29 to Thr46, His118 to Leu133, and Trp142 to Ala156. His118 is a binding site for chlorophyll a. Tyr126 contributes to the pheophytin a binding site. [CaMn4O5] cluster is bound by residues Asp170 and Glu189. A helical membrane pass occupies residues Phe197 to Leu218. Residue His198 coordinates chlorophyll a. A quinone-binding positions include His215 and Ser264–Phe265. His215 is a Fe cation binding site. His272 lines the Fe cation pocket. A helical membrane pass occupies residues Phe274–Leu288. Residues His332, Glu333, Asp342, and Ala344 each coordinate [CaMn4O5] cluster. A propeptide spanning residues Ala345–Gly354 is cleaved from the precursor.

This sequence belongs to the reaction center PufL/M/PsbA/D family. In terms of assembly, PSII is composed of 1 copy each of membrane proteins PsbA, PsbB, PsbC, PsbD, PsbE, PsbF, PsbH, PsbI, PsbJ, PsbK, PsbL, PsbM, PsbT, PsbX, PsbY, PsbZ, Psb30/Ycf12, peripheral proteins PsbO, CyanoQ (PsbQ), PsbU, PsbV and a large number of cofactors. It forms dimeric complexes. The D1/D2 heterodimer binds P680, chlorophylls that are the primary electron donor of PSII, and subsequent electron acceptors. It shares a non-heme iron and each subunit binds pheophytin, quinone, additional chlorophylls, carotenoids and lipids. D1 provides most of the ligands for the Mn4-Ca-O5 cluster of the oxygen-evolving complex (OEC). There is also a Cl(-1) ion associated with D1 and D2, which is required for oxygen evolution. The PSII complex binds additional chlorophylls, carotenoids and specific lipids. is required as a cofactor. Post-translationally, tyr-161 forms a radical intermediate that is referred to as redox-active TyrZ, YZ or Y-Z. C-terminally processed by CtpA; processing is essential to allow assembly of the oxygen-evolving complex and thus photosynthetic growth.

It localises to the cellular thylakoid membrane. It carries out the reaction 2 a plastoquinone + 4 hnu + 2 H2O = 2 a plastoquinol + O2. Its function is as follows. Photosystem II (PSII) is a light-driven water:plastoquinone oxidoreductase that uses light energy to abstract electrons from H(2)O, generating O(2) and a proton gradient subsequently used for ATP formation. It consists of a core antenna complex that captures photons, and an electron transfer chain that converts photonic excitation into a charge separation. The D1/D2 (PsbA/PsbD) reaction center heterodimer binds P680, the primary electron donor of PSII as well as several subsequent electron acceptors. In Synechococcus sp. (strain JA-3-3Ab) (Cyanobacteria bacterium Yellowstone A-Prime), this protein is Photosystem II protein D1 1.